The sequence spans 355 residues: UDP-3-O-acylglucosamine N-acyltransferase (355 aa).

The active-site Proton acceptor is the histidine 258.

This sequence belongs to the transferase hexapeptide repeat family. LpxD subfamily. As to quaternary structure, homotrimer.

It catalyses the reaction a UDP-3-O-[(3R)-3-hydroxyacyl]-alpha-D-glucosamine + a (3R)-hydroxyacyl-[ACP] = a UDP-2-N,3-O-bis[(3R)-3-hydroxyacyl]-alpha-D-glucosamine + holo-[ACP] + H(+). Its pathway is bacterial outer membrane biogenesis; LPS lipid A biosynthesis. Functionally, catalyzes the N-acylation of UDP-3-O-acylglucosamine using 3-hydroxyacyl-ACP as the acyl donor. Is involved in the biosynthesis of lipid A, a phosphorylated glycolipid that anchors the lipopolysaccharide to the outer membrane of the cell. The sequence is that of UDP-3-O-acylglucosamine N-acyltransferase from Bradyrhizobium sp. (strain BTAi1 / ATCC BAA-1182).